A 206-amino-acid chain; its full sequence is Probable thymidylate kinase (206 aa).

Residue 10-17 (GIDGSGKS) participates in ATP binding.

It belongs to the thymidylate kinase family.

The catalysed reaction is dTMP + ATP = dTDP + ADP. This Methanosarcina mazei (strain ATCC BAA-159 / DSM 3647 / Goe1 / Go1 / JCM 11833 / OCM 88) (Methanosarcina frisia) protein is Probable thymidylate kinase.